The sequence spans 342 residues: Phenylalanine--tRNA ligase alpha subunit (342 aa).

Glutamate 255 lines the Mg(2+) pocket.

It belongs to the class-II aminoacyl-tRNA synthetase family. Phe-tRNA synthetase alpha subunit type 1 subfamily. Tetramer of two alpha and two beta subunits. The cofactor is Mg(2+).

The protein localises to the cytoplasm. It carries out the reaction tRNA(Phe) + L-phenylalanine + ATP = L-phenylalanyl-tRNA(Phe) + AMP + diphosphate + H(+). In Pelodictyon phaeoclathratiforme (strain DSM 5477 / BU-1), this protein is Phenylalanine--tRNA ligase alpha subunit.